Here is a 793-residue protein sequence, read N- to C-terminus: Kinesin-like protein KIN-14C (793 aa).

Residues 1 to 43 (MASRNQNRPPRSPNAKKEGLGGISFDKRRKVETQGGTGRRQAF) are disordered. The tract at residues 1–69 (MASRNQNRPP…IEECGKVDFT (69 aa)) is globular. The segment covering 15–32 (AKKEGLGGISFDKRRKVE) has biased composition (basic and acidic residues). Residues 120-375 (KENLKVSLES…EQQLAIANER (256 aa)) are a coiled coil. Residues 431-772 (NIRVFCRVRP…LRFAARVNAC (342 aa)) form the Kinesin motor domain. 516–523 (GQTGSGKT) contributes to the ATP binding site.

This sequence belongs to the TRAFAC class myosin-kinesin ATPase superfamily. Kinesin family. KIN-14 subfamily.

Its subcellular location is the cytoplasm. It is found in the cytoskeleton. It localises to the spindle. The protein resides in the phragmoplast. The protein localises to the chromosome. Its subcellular location is the centromere. It is found in the kinetochore. Its function is as follows. Kinesin that supports microtubule movement in an ATP-dependent manner and has a minus-end directed polarity. Plays a crucial role in spindle morphogenesis in male meiosis. In mitosis, is required for normal microtubule accumulation at the spindle poles during prophase and may play a role in spindle assembly during prometaphase. This is Kinesin-like protein KIN-14C from Arabidopsis thaliana (Mouse-ear cress).